A 399-amino-acid chain; its full sequence is Dual-specificity RNA methyltransferase RlmN (399 aa).

The active-site Proton acceptor is glutamate 116. One can recognise a Radical SAM core domain in the interval 122–352 (SEDRLTLCIS…VLLRRSMGRD (231 aa)). Cysteines 129 and 357 form a disulfide. The [4Fe-4S] cluster site is built by cysteine 136, cysteine 140, and cysteine 143. S-adenosyl-L-methionine contacts are provided by residues 185-186 (GE), serine 217, 238-240 (SLN), and asparagine 314. Catalysis depends on cysteine 357, which acts as the S-methylcysteine intermediate.

The protein belongs to the radical SAM superfamily. RlmN family. Requires [4Fe-4S] cluster as cofactor.

It localises to the cytoplasm. It catalyses the reaction adenosine(2503) in 23S rRNA + 2 reduced [2Fe-2S]-[ferredoxin] + 2 S-adenosyl-L-methionine = 2-methyladenosine(2503) in 23S rRNA + 5'-deoxyadenosine + L-methionine + 2 oxidized [2Fe-2S]-[ferredoxin] + S-adenosyl-L-homocysteine. It carries out the reaction adenosine(37) in tRNA + 2 reduced [2Fe-2S]-[ferredoxin] + 2 S-adenosyl-L-methionine = 2-methyladenosine(37) in tRNA + 5'-deoxyadenosine + L-methionine + 2 oxidized [2Fe-2S]-[ferredoxin] + S-adenosyl-L-homocysteine. Specifically methylates position 2 of adenine 2503 in 23S rRNA and position 2 of adenine 37 in tRNAs. m2A2503 modification seems to play a crucial role in the proofreading step occurring at the peptidyl transferase center and thus would serve to optimize ribosomal fidelity. The protein is Dual-specificity RNA methyltransferase RlmN of Bdellovibrio bacteriovorus (strain ATCC 15356 / DSM 50701 / NCIMB 9529 / HD100).